The following is a 419-amino-acid chain: Tyrosine--tRNA ligase (419 aa).

An L-tyrosine-binding site is contributed by Tyr-34. Positions 39-48 (PTADSLHLGH) match the 'HIGH' region motif. Residues Tyr-169 and Gln-173 each contribute to the L-tyrosine site. A 'KMSKS' region motif is present at residues 229–233 (KFGKS). Lys-232 serves as a coordination point for ATP. Residues 352–419 (LNIIDLLVTS…KKKYFVLNFK (68 aa)) form the S4 RNA-binding domain.

Belongs to the class-I aminoacyl-tRNA synthetase family. TyrS type 1 subfamily. As to quaternary structure, homodimer.

The protein localises to the cytoplasm. The catalysed reaction is tRNA(Tyr) + L-tyrosine + ATP = L-tyrosyl-tRNA(Tyr) + AMP + diphosphate + H(+). Catalyzes the attachment of tyrosine to tRNA(Tyr) in a two-step reaction: tyrosine is first activated by ATP to form Tyr-AMP and then transferred to the acceptor end of tRNA(Tyr). The polypeptide is Tyrosine--tRNA ligase (Streptococcus agalactiae serotype V (strain ATCC BAA-611 / 2603 V/R)).